The primary structure comprises 449 residues: Bifunctional protein GlmU (449 aa).

The pyrophosphorylase stretch occupies residues 1–229 (MKLSAVILAA…EEDIYGINDR (229 aa)). UDP-N-acetyl-alpha-D-glucosamine-binding positions include 8–11 (LAAG), Lys22, Gln73, and 78–79 (GT). Asp102 contributes to the Mg(2+) binding site. Positions 139, 154, 169, and 227 each coordinate UDP-N-acetyl-alpha-D-glucosamine. Asn227 provides a ligand contact to Mg(2+). The segment at 230–250 (VQLAQAENILRQRKNRELMLS) is linker. Residues 251–449 (GVSLMDPAST…AGQKHLPRKG (199 aa)) form an N-acetyltransferase region. The UDP-N-acetyl-alpha-D-glucosamine site is built by Arg332 and Lys350. His362 (proton acceptor) is an active-site residue. Tyr365 and Asn376 together coordinate UDP-N-acetyl-alpha-D-glucosamine. Residues Ala379, 385 to 386 (NY), Ser404, Ala422, and Arg439 each bind acetyl-CoA.

In the N-terminal section; belongs to the N-acetylglucosamine-1-phosphate uridyltransferase family. This sequence in the C-terminal section; belongs to the transferase hexapeptide repeat family. In terms of assembly, homotrimer. The cofactor is Mg(2+).

It localises to the cytoplasm. It catalyses the reaction alpha-D-glucosamine 1-phosphate + acetyl-CoA = N-acetyl-alpha-D-glucosamine 1-phosphate + CoA + H(+). The enzyme catalyses N-acetyl-alpha-D-glucosamine 1-phosphate + UTP + H(+) = UDP-N-acetyl-alpha-D-glucosamine + diphosphate. It functions in the pathway nucleotide-sugar biosynthesis; UDP-N-acetyl-alpha-D-glucosamine biosynthesis; N-acetyl-alpha-D-glucosamine 1-phosphate from alpha-D-glucosamine 6-phosphate (route II): step 2/2. It participates in nucleotide-sugar biosynthesis; UDP-N-acetyl-alpha-D-glucosamine biosynthesis; UDP-N-acetyl-alpha-D-glucosamine from N-acetyl-alpha-D-glucosamine 1-phosphate: step 1/1. The protein operates within bacterial outer membrane biogenesis; LPS lipid A biosynthesis. Catalyzes the last two sequential reactions in the de novo biosynthetic pathway for UDP-N-acetylglucosamine (UDP-GlcNAc). The C-terminal domain catalyzes the transfer of acetyl group from acetyl coenzyme A to glucosamine-1-phosphate (GlcN-1-P) to produce N-acetylglucosamine-1-phosphate (GlcNAc-1-P), which is converted into UDP-GlcNAc by the transfer of uridine 5-monophosphate (from uridine 5-triphosphate), a reaction catalyzed by the N-terminal domain. The sequence is that of Bifunctional protein GlmU from Syntrophomonas wolfei subsp. wolfei (strain DSM 2245B / Goettingen).